A 689-amino-acid chain; its full sequence is MSEKTFLVEIGTEELPPKALRSLAESFAANFTAELDNAGLAHGTVQWFAAPRRLALKVANLAEAQPDREIEKRGPAIAQAFDAEGKPSKAAEGWARGCGITVDQAERLTTDKGEWLLYRAHVKGESTEALLPNMVATSLAKLPIPKLMRWGASDVHFVRPVHTVTLLLGDKVIPATILGIQSDRVIRGHRFMGEPEFTIDNADQYPEILRERGKVIADYEERKAKIKADAEEAARKIGGNADLSESLLEEVASLVEWPVVLTAKFEEKFLAVPAEALVYTMKGDQKYFPVYANDGKLLPNFIFVANIESKDPQQIISGNEKVVRPRLADAEFFFNTDRKKRLEDNLPRLQTVLFQQQLGTLRDKTDRIQALAGWIAEQIGADVNHATRAGLLSKCDLMTNMVFEFTDTQGVMGMHYARHDGEAEDVAVALNEQYQPRFAGDDLPSNPVACALAIADKMDTLAGIFGIGQHPKGDKDPFALRRAALGVLRIIVEKNLNLDLQTLTEEAVRLYGDKLTNANVVDDVIDFMLGRFRAWYQDEGYTVDTIQAVLARRPTRPADFDARMKAVSHFRTLDAAAALAAANKRVSNILAKSDEVLSDRVNASTLKEPEEIKLAMQVVVLRDKLEPYFTEGRYQDALVELAELREPVDAFFDKVMVMVDDKELRINRLTMLEKLRELFLRVADISLLQ.

The protein belongs to the class-II aminoacyl-tRNA synthetase family. Tetramer of two alpha and two beta subunits.

Its subcellular location is the cytoplasm. It catalyses the reaction tRNA(Gly) + glycine + ATP = glycyl-tRNA(Gly) + AMP + diphosphate. The polypeptide is Glycine--tRNA ligase beta subunit (Escherichia coli (strain K12 / MC4100 / BW2952)).